Reading from the N-terminus, the 165-residue chain is Large ribosomal subunit protein uL11 (165 aa).

The residue at position 38 (Ser-38) is a Phosphoserine. A Glycyl lysine isopeptide (Lys-Gly) (interchain with G-Cter in SUMO2) cross-link involves residue Lys-40. Residue Lys-48 forms a Glycyl lysine isopeptide (Lys-Gly) (interchain with G-Cter in ubiquitin) linkage. N6-acetyllysine is present on Lys-54. Lys-83 participates in a covalent cross-link: Glycyl lysine isopeptide (Lys-Gly) (interchain with G-Cter in ubiquitin). Position 165 is a phosphoserine (Ser-165).

This sequence belongs to the universal ribosomal protein uL11 family. In terms of assembly, component of the large ribosomal subunit. Mature ribosomes consist of a small (40S) and a large (60S) subunit. The 40S subunit contains about 33 different proteins and 1 molecule of RNA (18S). The 60S subunit contains about 49 different proteins and 3 molecules of RNA (28S, 5.8S and 5S). In terms of processing, ubiquitinated at Lys-48 and Lys-83 by RNF14 and RNF25 in response to ribosome collisions (ribosome stalling).

It localises to the cytoplasm. Functionally, component of the large ribosomal subunit. The ribosome is a large ribonucleoprotein complex responsible for the synthesis of proteins in the cell. Binds directly to 26S ribosomal RNA. This is Large ribosomal subunit protein uL11 (RPL12) from Bos taurus (Bovine).